We begin with the raw amino-acid sequence, 388 residues long: Purple acid phosphatase 19 (388 aa).

Residues M1–A24 form the signal peptide. Residues N97 and N111 are each glycosylated (N-linked (GlcNAc...) asparagine). 2 residues coordinate Fe cation: D145 and Y148. D145 serves as a coordination point for Zn(2+). N182 is a Zn(2+) binding site. N182 lines the substrate pocket. An N-linked (GlcNAc...) asparagine glycan is attached at N226. H238 contributes to the Zn(2+) binding site. Residue H248 is the Proton donor of the active site. H275 serves as a coordination point for Zn(2+). H275–H277 is a binding site for substrate. H277 contacts Fe cation. Residues N291 and N348 are each glycosylated (N-linked (GlcNAc...) asparagine).

This sequence belongs to the metallophosphoesterase superfamily. Purple acid phosphatase family. As to quaternary structure, homodimer. The cofactor is Fe cation. Requires Zn(2+) as cofactor. In terms of tissue distribution, specifically expressed in flowers.

The protein localises to the secreted. The catalysed reaction is a phosphate monoester + H2O = an alcohol + phosphate. This is Purple acid phosphatase 19 (PAP19) from Arabidopsis thaliana (Mouse-ear cress).